We begin with the raw amino-acid sequence, 232 residues long: Eukaryotic translation initiation factor NCBP (232 aa).

Positions 1–11 (MEPAVERKVPE) are enriched in basic and acidic residues. The tract at residues 1 to 49 (MEPAVERKVPEQEEQLQPSHARAEDAPPAAVEEEDEAEAEESERRNREL) is disordered. Positions 31–41 (VEEEDEAEAEE) are enriched in acidic residues.

Belongs to the eukaryotic initiation factor 4E family. In terms of assembly, EIF4F is a multi-subunit complex, the composition of which varies with external and internal environmental conditions. It is composed of at least EIF4A, EIF4E and EIF4G. EIF4E is also known to interact with other partners. In higher plants two isoforms of EIF4F have been identified, named isoform EIF4F and isoform EIF(iso)4F. Isoform EIF4F has subunits p220 and p26, whereas isoform EIF(iso)4F has subunits p82 and p28.

Recognizes and binds the 7-methylguanosine-containing mRNA cap during an early step in the initiation of protein synthesis and facilitates ribosome binding by inducing the unwinding of the mRNAs secondary structures. The polypeptide is Eukaryotic translation initiation factor NCBP (NCBP) (Triticum aestivum (Wheat)).